The following is a 138-amino-acid chain: MIKLVEPLKKLIIDGVGVSGEEVEEQLFGGFCECGGVMYQRFWFTRDSEKILVSECEKCWKHKAMIFNSHSFVSHQSVEVLGKYDFVELLKETLGEKEFESLVRKAKNEEFDPVSYTRAKKMLTSMNLDIDEILDQVR.

This is an uncharacterized protein from Archaeoglobus fulgidus (strain ATCC 49558 / DSM 4304 / JCM 9628 / NBRC 100126 / VC-16).